The following is a 115-amino-acid chain: NADH-ubiquinone oxidoreductase chain 3 (115 aa).

Helical transmembrane passes span 3-23 (LFIM…LNLL), 55-75 (FFMV…LLPL), and 87-107 (TITW…YEWL).

This sequence belongs to the complex I subunit 3 family.

It localises to the mitochondrion membrane. It catalyses the reaction a ubiquinone + NADH + 5 H(+)(in) = a ubiquinol + NAD(+) + 4 H(+)(out). Functionally, core subunit of the mitochondrial membrane respiratory chain NADH dehydrogenase (Complex I) that is believed to belong to the minimal assembly required for catalysis. Complex I functions in the transfer of electrons from NADH to the respiratory chain. The immediate electron acceptor for the enzyme is believed to be ubiquinone. The chain is NADH-ubiquinone oxidoreductase chain 3 (MT-ND3) from Alligator mississippiensis (American alligator).